A 141-amino-acid chain; its full sequence is Large ribosomal subunit protein uL11 (141 aa).

This sequence belongs to the universal ribosomal protein uL11 family. As to quaternary structure, part of the ribosomal stalk of the 50S ribosomal subunit. Interacts with L10 and the large rRNA to form the base of the stalk. L10 forms an elongated spine to which L12 dimers bind in a sequential fashion forming a multimeric L10(L12)X complex. One or more lysine residues are methylated.

Forms part of the ribosomal stalk which helps the ribosome interact with GTP-bound translation factors. This Lactobacillus johnsonii (strain CNCM I-12250 / La1 / NCC 533) protein is Large ribosomal subunit protein uL11.